The chain runs to 313 residues: MKKKNTTPTPHDATFRQFLTQPDIARDFMELHLPAELRAICDLSTLKLESGSFVEDDLRQYFSDVLYSLKTTAGDGYIHVLVEHQSTPDKHMAFRLIRYAVAAMQRHLEAGHKKLPLVIPVLFYTGKRSPYPYSTRWLDEFDDTALADKLYSSAFPLVDVTVIPDDEIAGHRSMAALTLLQKHIHQRDLAELVDRLAPILLAGYLSSSQVISLVHYIVQAGETSDAEAFVRELAQRVPQHGDALMTIAQQLEQKGIEKGIQLGEQRGIEKGRSEGEREATLKIARTMLQNCIDRNTVMKMTGLTEDDLAQIRH.

The protein belongs to the Rpn/YhgA-like nuclease family.

Functionally, a low activity DNA endonuclease probably yielding 3'-hydroxyl ends. Involved in RecA-independent recombination and horizontal gene transfer. The protein is Recombination-promoting nuclease pSLT051 of Salmonella typhimurium (strain LT2 / SGSC1412 / ATCC 700720).